We begin with the raw amino-acid sequence, 579 residues long: Arginine--tRNA ligase (579 aa).

Positions 136-146 match the 'HIGH' region motif; the sequence is ANPTGPLHIGH.

This sequence belongs to the class-I aminoacyl-tRNA synthetase family. Monomer.

The protein resides in the cytoplasm. It carries out the reaction tRNA(Arg) + L-arginine + ATP = L-arginyl-tRNA(Arg) + AMP + diphosphate. The protein is Arginine--tRNA ligase of Anaplasma marginale (strain St. Maries).